A 72-amino-acid chain; its full sequence is UPF0270 protein PM1156 (72 aa).

Belongs to the UPF0270 family.

This is UPF0270 protein PM1156 from Pasteurella multocida (strain Pm70).